Consider the following 134-residue polypeptide: Small ribosomal subunit protein uS9 (134 aa).

A disordered region spans residues 113–134 (REVERKKYGLKKARRAPQFSKR). Basic residues predominate over residues 120-134 (YGLKKARRAPQFSKR).

Belongs to the universal ribosomal protein uS9 family.

The sequence is that of Small ribosomal subunit protein uS9 from Thermotoga petrophila (strain ATCC BAA-488 / DSM 13995 / JCM 10881 / RKU-1).